Here is a 169-residue protein sequence, read N- to C-terminus: Ribosome maturation factor RimM (169 aa).

Residues 94–168 (DDEFYHADLI…RIVADPPEGL (75 aa)) enclose the PRC barrel domain.

It belongs to the RimM family. Binds ribosomal protein uS19.

It localises to the cytoplasm. In terms of biological role, an accessory protein needed during the final step in the assembly of 30S ribosomal subunit, possibly for assembly of the head region. Essential for efficient processing of 16S rRNA. May be needed both before and after RbfA during the maturation of 16S rRNA. It has affinity for free ribosomal 30S subunits but not for 70S ribosomes. The sequence is that of Ribosome maturation factor RimM from Cereibacter sphaeroides (strain ATCC 17029 / ATH 2.4.9) (Rhodobacter sphaeroides).